The chain runs to 190 residues: Putative 3-methyladenine DNA glycosylase (190 aa).

It belongs to the DNA glycosylase MPG family.

The polypeptide is Putative 3-methyladenine DNA glycosylase (Rubrobacter xylanophilus (strain DSM 9941 / JCM 11954 / NBRC 16129 / PRD-1)).